We begin with the raw amino-acid sequence, 88 residues long: Translation initiation factor IF-1 2 (88 aa).

Residues 1–72 enclose the S1-like domain; sequence MAKEELIEMQ…TKGRITFRHL (72 aa).

Belongs to the IF-1 family. Component of the 30S ribosomal translation pre-initiation complex which assembles on the 30S ribosome in the order IF-2 and IF-3, IF-1 and N-formylmethionyl-tRNA(fMet); mRNA recruitment can occur at any time during PIC assembly.

Its subcellular location is the cytoplasm. One of the essential components for the initiation of protein synthesis. Stabilizes the binding of IF-2 and IF-3 on the 30S subunit to which N-formylmethionyl-tRNA(fMet) subsequently binds. Helps modulate mRNA selection, yielding the 30S pre-initiation complex (PIC). Upon addition of the 50S ribosomal subunit IF-1, IF-2 and IF-3 are released leaving the mature 70S translation initiation complex. The sequence is that of Translation initiation factor IF-1 2 from Acidovorax sp. (strain JS42).